The following is a 436-amino-acid chain: Enolase (436 aa).

Gln167 is a binding site for (2R)-2-phosphoglycerate. Glu209 acts as the Proton donor in catalysis. 3 residues coordinate Mg(2+): Asp246, Glu291, and Asp318. 4 residues coordinate (2R)-2-phosphoglycerate: Lys343, Arg372, Ser373, and Lys394. Lys343 serves as the catalytic Proton acceptor.

The protein belongs to the enolase family. Component of the RNA degradosome, a multiprotein complex involved in RNA processing and mRNA degradation. Mg(2+) serves as cofactor.

The protein resides in the cytoplasm. It is found in the secreted. It localises to the cell surface. The catalysed reaction is (2R)-2-phosphoglycerate = phosphoenolpyruvate + H2O. The protein operates within carbohydrate degradation; glycolysis; pyruvate from D-glyceraldehyde 3-phosphate: step 4/5. Functionally, catalyzes the reversible conversion of 2-phosphoglycerate (2-PG) into phosphoenolpyruvate (PEP). It is essential for the degradation of carbohydrates via glycolysis. This Glaesserella parasuis serovar 5 (strain SH0165) (Haemophilus parasuis) protein is Enolase.